We begin with the raw amino-acid sequence, 149 residues long: MHCPFCSATDTKVIDSRLVAEGHQVRRRRECTECHERFTTFEGAELVMPRVIKRDGSRQPFDEEKLQGGMLRAVEKRPVSMDEIEQALSKIKSTLRATGEREVPSEMVGNLMMEQLMSLDKVAYIRFASVYRAFEDVSEFGEAIAKLQK.

A zinc finger spans residues Cys3–Cys34. The ATP-cone domain occupies Pro49–Glu139.

This sequence belongs to the NrdR family. It depends on Zn(2+) as a cofactor.

Negatively regulates transcription of bacterial ribonucleotide reductase nrd genes and operons by binding to NrdR-boxes. This Shewanella baltica (strain OS223) protein is Transcriptional repressor NrdR.